The chain runs to 458 residues: tRNA-2-methylthio-N(6)-dimethylallyladenosine synthase (458 aa).

One can recognise an MTTase N-terminal domain in the interval 2 to 118 (PKLYIKTYGC…VFEHVDGILR (117 aa)). Residues cysteine 11, cysteine 47, cysteine 81, cysteine 170, cysteine 174, and cysteine 177 each contribute to the [4Fe-4S] cluster site. The region spanning 156–389 (PGVRSTAYVS…LAVVNEIAIR (234 aa)) is the Radical SAM core domain. The 64-residue stretch at 392–455 (RDLVGTVQEV…GFTLYGVPCP (64 aa)) folds into the TRAM domain.

The protein belongs to the methylthiotransferase family. MiaB subfamily. As to quaternary structure, monomer. The cofactor is [4Fe-4S] cluster.

It is found in the cytoplasm. It catalyses the reaction N(6)-dimethylallyladenosine(37) in tRNA + (sulfur carrier)-SH + AH2 + 2 S-adenosyl-L-methionine = 2-methylsulfanyl-N(6)-dimethylallyladenosine(37) in tRNA + (sulfur carrier)-H + 5'-deoxyadenosine + L-methionine + A + S-adenosyl-L-homocysteine + 2 H(+). Its function is as follows. Catalyzes the methylthiolation of N6-(dimethylallyl)adenosine (i(6)A), leading to the formation of 2-methylthio-N6-(dimethylallyl)adenosine (ms(2)i(6)A) at position 37 in tRNAs that read codons beginning with uridine. This chain is tRNA-2-methylthio-N(6)-dimethylallyladenosine synthase, found in Akkermansia muciniphila (strain ATCC BAA-835 / DSM 22959 / JCM 33894 / BCRC 81048 / CCUG 64013 / CIP 107961 / Muc).